Here is a 656-residue protein sequence, read N- to C-terminus: Methylenetetrahydrofolate reductase (NADPH) (656 aa).

The disordered stretch occupies residues 1–46 (MVNEARGNDSLNPCLEGSASSSSESSKDSSRCSTPGLDPERHERLR). Residues S10, S18, S20, S21, S23, S25, S26, S29, and S30 each carry the phosphoserine modification. Residue T34 is modified to Phosphothreonine. E63 serves as the catalytic Proton donor/acceptor. Residues 63–68 (EFFPPR) and 94–95 (TW) contribute to the NAD(+) site. The residue at position 94 (T94) is a Phosphothreonine. FAD is bound at residue 94 to 95 (TW). S103 carries the post-translational modification Phosphoserine. Residues H127, 157–159 (RGD), 174–175 (YA), Y197, 201–204 (HPEA), D210, and K217 each bind FAD. D159 serves as a coordination point for substrate. Positions 228, 321, and 325 each coordinate substrate. The residue at position 394 (S394) is a Phosphoserine. At T451 the chain carries Phosphothreonine. S-adenosyl-L-methionine is bound by residues N456, 461 to 464 (AAET), 481 to 485 (TINSQ), T560, and T573.

Belongs to the methylenetetrahydrofolate reductase family. As to quaternary structure, homodimer. The cofactor is FAD. In terms of processing, phosphorylation of an N-terminal serine-rich phosphorylation region increases sensitivity to S-adenosylmethionine and inhibition.

It catalyses the reaction (6S)-5-methyl-5,6,7,8-tetrahydrofolate + NADP(+) = (6R)-5,10-methylene-5,6,7,8-tetrahydrofolate + NADPH + H(+). It participates in one-carbon metabolism; tetrahydrofolate interconversion. Its activity is regulated as follows. Allosterically regulated by S-adenosylmethionine (SAM). In terms of biological role, catalyzes the conversion of 5,10-methylenetetrahydrofolate to 5-methyltetrahydrofolate, a cosubstrate for homocysteine remethylation to methionine. Represents a key regulatory connection between the folate and methionine cycles. The polypeptide is Methylenetetrahydrofolate reductase (NADPH) (MTHFR) (Macaca fascicularis (Crab-eating macaque)).